The chain runs to 444 residues: Tol-Pal system protein TolB (444 aa).

Positions 1–18 (MKNIIYCILLLFSFNSYA) are cleaved as a signal peptide.

Belongs to the TolB family. In terms of assembly, the Tol-Pal system is composed of five core proteins: the inner membrane proteins TolA, TolQ and TolR, the periplasmic protein TolB and the outer membrane protein Pal. They form a network linking the inner and outer membranes and the peptidoglycan layer.

The protein localises to the periplasm. Functionally, part of the Tol-Pal system, which plays a role in outer membrane invagination during cell division and is important for maintaining outer membrane integrity. This chain is Tol-Pal system protein TolB, found in Rickettsia bellii (strain OSU 85-389).